We begin with the raw amino-acid sequence, 251 residues long: Triosephosphate isomerase (251 aa).

9–11 serves as a coordination point for substrate; that stretch reads NWK. H95 acts as the Electrophile in catalysis. The active-site Proton acceptor is E167. Substrate-binding positions include G173, S212, and 233 to 234; that span reads GG.

The protein belongs to the triosephosphate isomerase family. As to quaternary structure, homodimer.

The protein localises to the cytoplasm. The enzyme catalyses D-glyceraldehyde 3-phosphate = dihydroxyacetone phosphate. It participates in carbohydrate biosynthesis; gluconeogenesis. Its pathway is carbohydrate degradation; glycolysis; D-glyceraldehyde 3-phosphate from glycerone phosphate: step 1/1. In terms of biological role, involved in the gluconeogenesis. Catalyzes stereospecifically the conversion of dihydroxyacetone phosphate (DHAP) to D-glyceraldehyde-3-phosphate (G3P). This Pseudomonas putida (strain W619) protein is Triosephosphate isomerase.